A 277-amino-acid polypeptide reads, in one-letter code: Ubiquitin-conjugating enzyme suppressor 1 (277 aa).

The tract at residues 254 to 277 is disordered; that stretch reads RTLACPDETNDNRGSEHYTKRKKI.

Functionally, not known; its elevated expression suppresses the conditional cell cycle defects associated with UBC3/CDC34 mutations. The protein is Ubiquitin-conjugating enzyme suppressor 1 (UBS1) of Saccharomyces cerevisiae (strain ATCC 204508 / S288c) (Baker's yeast).